Consider the following 354-residue polypeptide: Serum paraoxonase/lactonase 3 (354 aa).

A disulfide bridge connects residues C42 and C352. N50 carries an N-linked (GlcNAc...) asparagine glycan. Positions 53 and 54 each coordinate Ca(2+). H114 acts as the Proton acceptor in catalysis. I116 provides a ligand contact to Ca(2+). S165 carries the phosphoserine modification. Ca(2+)-binding residues include N167, D168, N223, D268, and N269. N-linked (GlcNAc...) asparagine glycans are attached at residues N269 and N323.

This sequence belongs to the paraoxonase family. As to quaternary structure, homodimer. Requires Ca(2+) as cofactor. Post-translationally, glycosylated. In terms of processing, the signal sequence is not cleaved.

Its subcellular location is the secreted. It localises to the extracellular space. It catalyses the reaction a phenyl acetate + H2O = a phenol + acetate + H(+). It carries out the reaction An aryl dialkyl phosphate + H2O = dialkyl phosphate + an aryl alcohol.. The catalysed reaction is an N-acyl-L-homoserine lactone + H2O = an N-acyl-L-homoserine + H(+). In terms of biological role, has low activity towards the organophosphate paraxon and aromatic carboxylic acid esters. Rapidly hydrolyzes lactones such as statin prodrugs (e.g. lovastatin). Hydrolyzes aromatic lactones and 5- or 6-member ring lactones with aliphatic substituents but not simple lactones or those with polar substituents. This Rattus norvegicus (Rat) protein is Serum paraoxonase/lactonase 3 (Pon3).